A 612-amino-acid chain; its full sequence is MDIKKLQDYQKHIRNFSIVAHIDHGKSTIADRILELTDTVSERQMKNQLLDDMPLERQRGITIKLNSVEVKYHAKDGETYIFHLIDTPGHVDFSYEVSRSLAACEGALLVVDATQGVQAQTLANTYLAIDDDLEILPVINKIDLPSADPEMCKNEIEEMIGLDASDAVEVSGKTGQGIPELLEEIVKKVPAPNGDLNAPLKALIFDSKYDDYRGVVLSVRIEEGTVKPGDRIRIMNTGKEFEVTEVGVSSPHPVKKDMLIAGDVGYLTANIKSVRETRVGDTITSAENPTEKPLPGYRQIPPMVYSGMYPVDNQKYDDLKEALQKLQLNDAALEFEPETSQALGFGFRCGFLGLLHMDVVQERLEQEFGMDLIMTAPSVDYHAIMNDGSTKLIDNPADLPDAGEYKEVQEPYVKAEVMVPNDFVGPVMELCQRKRGEFVTMDYLDKYRVNVIYNMPLAEIIYDFFDELKSSTKGYASLDYEITGYRATDLVKIDMLLNKEPIDALSFIAHREEAQNRARQMTTMLKKLIPRQNFEVDIQGAIGAKIISRATIKPYRKDVTWKIHTGDPDRRAKLLEKQRRGKKRMKAVGKVEVPQDAFMAVLKMNDDDIKGK.

The 183-residue stretch at 11–193 folds into the tr-type G domain; sequence KHIRNFSIVA…EIVKKVPAPN (183 aa). Residues 23-28 and 140-143 contribute to the GTP site; these read DHGKST and NKID.

It belongs to the TRAFAC class translation factor GTPase superfamily. Classic translation factor GTPase family. LepA subfamily.

Its subcellular location is the cell membrane. The enzyme catalyses GTP + H2O = GDP + phosphate + H(+). Its function is as follows. Required for accurate and efficient protein synthesis under certain stress conditions. May act as a fidelity factor of the translation reaction, by catalyzing a one-codon backward translocation of tRNAs on improperly translocated ribosomes. Back-translocation proceeds from a post-translocation (POST) complex to a pre-translocation (PRE) complex, thus giving elongation factor G a second chance to translocate the tRNAs correctly. Binds to ribosomes in a GTP-dependent manner. In Lactobacillus gasseri (strain ATCC 33323 / DSM 20243 / BCRC 14619 / CIP 102991 / JCM 1131 / KCTC 3163 / NCIMB 11718 / NCTC 13722 / AM63), this protein is Elongation factor 4.